The chain runs to 381 residues: G-protein coupled receptor homolog Q2/3L (381 aa).

At 1–91 the chain is on the extracellular side; the sequence is MNYTLSTVSS…HCDDGVDTTS (91 aa). Asn2, Asn15, Asn19, Asn41, Asn50, Asn56, and Asn62 each carry an N-linked (GlcNAc...) asparagine; by host glycan. The helical transmembrane segment at 92 to 112 threads the bilayer; it reads FGLITLYSTIFFLGLFGNIIV. Over 113–126 the chain is Cytoplasmic; it reads LTVLRKYKIKTIQD. The chain crosses the membrane as a helical span at residues 127–147; that stretch reads MFLLNLTLSDLIFVLVFPFNL. The Extracellular portion of the chain corresponds to 148-165; that stretch reads YDSIAKQWSLGDCLCKFK. A helical transmembrane segment spans residues 166-186; sequence AMFYFVGFYNSMSFITLMSID. Residues 187–206 lie on the Cytoplasmic side of the membrane; sequence RYLAVVHPVKSMPIRTKRYG. The chain crosses the membrane as a helical span at residues 207–227; sequence IVLSMVVWIVSTIESFPIMLF. The Extracellular segment spans residues 228–251; the sequence is YETKKVYGITYCHVFYNDNAKIWK. Residues 252–272 traverse the membrane as a helical segment; it reads LFINFEINIFGMIIPLTILLY. Topologically, residues 273 to 294 are cytoplasmic; sequence CYYKILNTLKTSQTKNKKAIKM. Residues 295-315 form a helical membrane-spanning segment; it reads VFLIVICSVLFLLPFSVTVFV. The Extracellular segment spans residues 316–336; it reads SSLYLLNVFSGCMALRFVNLA. A helical transmembrane segment spans residues 337–357; it reads VHVAEIVSLCHCFINPLIYAF. The Cytoplasmic portion of the chain corresponds to 358–381; it reads CSREFTKKLLRLRTTSSAGSISIG.

Belongs to the G-protein coupled receptor 1 family.

It is found in the host cell membrane. Putative chemokine receptor. The sequence is that of G-protein coupled receptor homolog Q2/3L from Ovis aries (Sheep).